Consider the following 280-residue polypeptide: Phosphatidylserine decarboxylase proenzyme (280 aa).

Catalysis depends on charge relay system; for autoendoproteolytic cleavage activity residues D88, H145, and S248. The active-site Schiff-base intermediate with substrate; via pyruvic acid; for decarboxylase activity is the S248. The residue at position 248 (S248) is a Pyruvic acid (Ser); by autocatalysis.

It belongs to the phosphatidylserine decarboxylase family. PSD-B subfamily. Prokaryotic type I sub-subfamily. As to quaternary structure, heterodimer of a large membrane-associated beta subunit and a small pyruvoyl-containing alpha subunit. Pyruvate serves as cofactor. Post-translationally, is synthesized initially as an inactive proenzyme. Formation of the active enzyme involves a self-maturation process in which the active site pyruvoyl group is generated from an internal serine residue via an autocatalytic post-translational modification. Two non-identical subunits are generated from the proenzyme in this reaction, and the pyruvate is formed at the N-terminus of the alpha chain, which is derived from the carboxyl end of the proenzyme. The autoendoproteolytic cleavage occurs by a canonical serine protease mechanism, in which the side chain hydroxyl group of the serine supplies its oxygen atom to form the C-terminus of the beta chain, while the remainder of the serine residue undergoes an oxidative deamination to produce ammonia and the pyruvoyl prosthetic group on the alpha chain. During this reaction, the Ser that is part of the protease active site of the proenzyme becomes the pyruvoyl prosthetic group, which constitutes an essential element of the active site of the mature decarboxylase.

The protein localises to the cell membrane. It catalyses the reaction a 1,2-diacyl-sn-glycero-3-phospho-L-serine + H(+) = a 1,2-diacyl-sn-glycero-3-phosphoethanolamine + CO2. The protein operates within phospholipid metabolism; phosphatidylethanolamine biosynthesis; phosphatidylethanolamine from CDP-diacylglycerol: step 2/2. Catalyzes the formation of phosphatidylethanolamine (PtdEtn) from phosphatidylserine (PtdSer). The protein is Phosphatidylserine decarboxylase proenzyme of Methylobacillus flagellatus (strain ATCC 51484 / DSM 6875 / VKM B-1610 / KT).